The sequence spans 83 residues: Mu-theraphotoxin-Hhn2m (83 aa).

The N-terminal stretch at 1–21 (MKASMFLALAGLVLLFVVGYA) is a signal peptide. Residues 22–48 (SESEEKEFPIELLSKIFAVDVFKGEER) constitute a propeptide that is removed on maturation. 3 disulfide bridges follow: Cys-50/Cys-65, Cys-57/Cys-70, and Cys-64/Cys-77. Leu-81 bears the Leucine amide mark.

Belongs to the neurotoxin 10 (Hwtx-1) family. 15 (Hntx-3) subfamily. Monomer. In terms of tissue distribution, expressed by the venom gland.

It is found in the secreted. Lethal neurotoxin. Selectively blocks tetrodotoxin-sensitive voltage-gated sodium channels (Nav). Does not affect tetrodotoxin-resistant voltage-gated sodium channels or calcium channels. The polypeptide is Mu-theraphotoxin-Hhn2m (Cyriopagopus hainanus (Chinese bird spider)).